The following is a 170-amino-acid chain: Adenine phosphoribosyltransferase (170 aa).

This sequence belongs to the purine/pyrimidine phosphoribosyltransferase family. As to quaternary structure, homodimer.

It is found in the cytoplasm. The enzyme catalyses AMP + diphosphate = 5-phospho-alpha-D-ribose 1-diphosphate + adenine. Its pathway is purine metabolism; AMP biosynthesis via salvage pathway; AMP from adenine: step 1/1. Functionally, catalyzes a salvage reaction resulting in the formation of AMP, that is energically less costly than de novo synthesis. This Lysinibacillus sphaericus (strain C3-41) protein is Adenine phosphoribosyltransferase.